Reading from the N-terminus, the 450-residue chain is Glucose-6-phosphate isomerase (450 aa).

Threonine 38 carries the phosphothreonine modification. The active-site Proton donor is glutamate 290. Residues histidine 311 and lysine 425 contribute to the active site.

It belongs to the GPI family.

The protein localises to the cytoplasm. The catalysed reaction is alpha-D-glucose 6-phosphate = beta-D-fructose 6-phosphate. Its pathway is carbohydrate biosynthesis; gluconeogenesis. It participates in carbohydrate degradation; glycolysis; D-glyceraldehyde 3-phosphate and glycerone phosphate from D-glucose: step 2/4. Functionally, catalyzes the reversible isomerization of glucose-6-phosphate to fructose-6-phosphate. This is Glucose-6-phosphate isomerase from Bacillus licheniformis (strain ATCC 14580 / DSM 13 / JCM 2505 / CCUG 7422 / NBRC 12200 / NCIMB 9375 / NCTC 10341 / NRRL NRS-1264 / Gibson 46).